The following is a 377-amino-acid chain: MDLKELFDLNLCLRCTGRIFAAVDTGLTNEERGARLYFAYKSIYGERDVPESCYLCNGVFKKFDEFFNILMSKLNNYEFNSILVGSTFDENIIEMEKDIQSRFGSKGESIKKEFNREFGKYLSKRLGKPFSKDADLTIEVDALYENVNIIVKPVYIYGVYIKKSRDISQTRWIHKTGESIESIIGNELRSMTGCENYYLHGSGREDVDVMMLGNGREFVIEAAMPKRRYIDLYELQLRVNASGILFIYNLSYSSKATVRRIKSELHEKLYIAEVTGDLNKDIKKACSKFNNLIIEQRTPLRVINHRSDLVRRKKINYINIISIMNGRALLKICAEAGTYIKELVNGDNGRTVPSLSSVYGSQLQVSSLDVVKIYRDD.

Asp-206 (nucleophile) is an active-site residue. Substrate contacts are provided by Tyr-270 and Tyr-339.

The protein belongs to the pseudouridine synthase Pus10 family.

The catalysed reaction is uridine(54) in tRNA = pseudouridine(54) in tRNA. It catalyses the reaction uridine(55) in tRNA = pseudouridine(55) in tRNA. Functionally, responsible for synthesis of pseudouridine from uracil-54 and uracil-55 in the psi GC loop of transfer RNAs. The chain is tRNA pseudouridine synthase Pus10 from Picrophilus torridus (strain ATCC 700027 / DSM 9790 / JCM 10055 / NBRC 100828 / KAW 2/3).